Here is a 425-residue protein sequence, read N- to C-terminus: uncharacterized protein (425 aa).

A TRAM domain is found at 1–57 (MKDKPLKLTVEKLVYGGYGFSRLNGKAVFVRFASPKELVEAKVVKEKKDYTEAVVTK). [4Fe-4S] cluster contacts are provided by C70, C76, C79, and C153. S-adenosyl-L-methionine-binding residues include Q260, D308, and D354. The active-site Nucleophile is C381.

This sequence belongs to the class I-like SAM-binding methyltransferase superfamily. RNA M5U methyltransferase family.

This is an uncharacterized protein from Aquifex aeolicus (strain VF5).